Here is a 331-residue protein sequence, read N- to C-terminus: ESX-3 secretion system protein EccE3 (331 aa).

The next 2 helical transmembrane spans lie at 11–31 and 37–57; these read GRVT…PWQS and LLGV…GLYF.

This sequence belongs to the EccE family. Part of the ESX-3 / type VII secretion system (T7SS), which is composed of cytosolic and membrane components. The ESX-3 membrane complex is composed of EccB3, EccC3, EccD3 and EccE3.

The protein resides in the cell inner membrane. Its function is as follows. Part of the ESX-3 specialized secretion system, which is important for iron and zinc uptake or homeostasis. The chain is ESX-3 secretion system protein EccE3 from Mycobacterium tuberculosis (strain CDC 1551 / Oshkosh).